The following is a 1011-amino-acid chain: CRM-domain containing factor CFM2, chloroplastic (1011 aa).

The N-terminal 45 residues, 1-45 (MLLPLFHQQPLILAKTFPDRIFPPFLVPNTLVSRRNVSRANSGIF), are a transit peptide targeting the chloroplast. The segment covering 77-90 (HDSPTRRITGEESG) has biased composition (basic and acidic residues). Residues 77–96 (HDSPTRRITGEESGKNSPGE) are disordered. CRM domains are found at residues 164-260 (LTLP…YFVS), 376-473 (PKLT…AVSS), and 577-677 (EGIT…QCLR). Disordered regions lie at residues 721-810 (DSAT…GNSL) and 841-872 (LNAN…DGLV). Positions 722–736 (SATNETWSDGESSNM) are enriched in polar residues. Residues 743–757 (ENQHTEPEKAREKIE) show a composition bias toward basic and acidic residues. The segment covering 762–771 (SDLSVPSSGE) has biased composition (polar residues). The segment covering 772 to 782 (ENWEDDSEGEV) has biased composition (acidic residues). Over residues 849–859 (GSSTGSGSQIS) the composition is skewed to polar residues. The CRM 4 domain occupies 873 to 972 (TDLSNRERLI…WGAEEEMKSF (100 aa)).

Interacts with RNA. Part of large ribonucleo-protein particles that contain CAF1 and/or CAF2.

It is found in the plastid. Its subcellular location is the chloroplast stroma. Functionally, binds specific group II introns in chloroplasts and facilitates their splicing. Acts on both subgroup IIA and subgroup IIB introns. The substrates of the subgroup IIB also require the CRM domain proteins CAF1 or CAF2, with a simultaneous binding of CFM2 and CAF1 or CAF2. Can bind to and promote the splicing of the single group I intron in chloroplast tRNA transcript of trnL-UAA gene. In Arabidopsis thaliana (Mouse-ear cress), this protein is CRM-domain containing factor CFM2, chloroplastic.